A 365-amino-acid chain; its full sequence is DNA replication and repair protein RecF (365 aa).

Gly-30 to Thr-37 lines the ATP pocket.

Belongs to the RecF family.

Its subcellular location is the cytoplasm. The RecF protein is involved in DNA metabolism; it is required for DNA replication and normal SOS inducibility. RecF binds preferentially to single-stranded, linear DNA. It also seems to bind ATP. In Shewanella halifaxensis (strain HAW-EB4), this protein is DNA replication and repair protein RecF.